A 201-amino-acid polypeptide reads, in one-letter code: Small ribosomal subunit protein uS4c (201 aa).

In terms of domain architecture, S4 RNA-binding spans 91–151 (MRLDNIIFQL…TKNPEELRTI (61 aa)).

This sequence belongs to the universal ribosomal protein uS4 family. In terms of assembly, part of the 30S ribosomal subunit. Contacts protein S5. The interaction surface between S4 and S5 is involved in control of translational fidelity.

The protein resides in the plastid. Its subcellular location is the chloroplast. Its function is as follows. One of the primary rRNA binding proteins, it binds directly to 16S rRNA where it nucleates assembly of the body of the 30S subunit. Functionally, with S5 and S12 plays an important role in translational accuracy. The chain is Small ribosomal subunit protein uS4c (rps4) from Welwitschia mirabilis (Tree tumbo).